We begin with the raw amino-acid sequence, 294 residues long: tRNA pseudouridine synthase B (294 aa).

D39 acts as the Nucleophile in catalysis.

Belongs to the pseudouridine synthase TruB family. Type 1 subfamily.

The enzyme catalyses uridine(55) in tRNA = pseudouridine(55) in tRNA. In terms of biological role, responsible for synthesis of pseudouridine from uracil-55 in the psi GC loop of transfer RNAs. The polypeptide is tRNA pseudouridine synthase B (Streptococcus pyogenes serotype M28 (strain MGAS6180)).